A 302-amino-acid chain; its full sequence is Uricase (302 aa).

Active-site charge relay system residues include K22 and T67. Urate-binding residues include T67, D68, F163, R180, Q223, and N249. H251 (charge relay system) is an active-site residue.

The protein belongs to the uricase family. Homotetramer.

The enzyme catalyses urate + O2 + H2O = 5-hydroxyisourate + H2O2. The protein operates within purine metabolism; urate degradation; (S)-allantoin from urate: step 1/3. In terms of biological role, catalyzes the oxidation of uric acid to 5-hydroxyisourate, which is further processed to form (S)-allantoin. In Arthrobacter globiformis, this protein is Uricase (uox).